The chain runs to 467 residues: Mitochondrial adenyl nucleotide antiporter SLC25A23 (467 aa).

The regulatory N-terminal domain stretch occupies residues 1–148 (MRGGSSDAER…DHFLLHSLEN (148 aa)). Topologically, residues 1–187 (MRGGSSDAER…EKLTGMWWKQ (187 aa)) are mitochondrial intermembrane. 3 consecutive EF-hand domains span residues 9–44 (ERRQ…LGRG), 76–111 (EREQ…LGIS), and 112–147 (ISLE…HSLE). Ca(2+)-binding residues include Asp22, Asn24, Asp26, Arg28, and Glu33. The disordered stretch occupies residues 39 to 61 (ARLGRGDPDRAQQGVSSDWDADP). Residues Asp89, Asn91, Asp93, His95, and Glu100 each contribute to the Ca(2+) site. The interval 149–158 (VEDVLYFWKH) is linker region. Positions 164 to 467 (IGECLTVPDE…MKQALGVTSR (304 aa)) are C-terminal transmembrane transporter domain. Solcar repeat units lie at residues 182–268 (GMWW…IKRA), 276–361 (LHVQ…LKNR), and 373–461 (PGIL…MKQA). Residues 188–205 (LVAGAVAGAVSRTGTAPL) traverse the membrane as a helical segment. Residues 206–242 (DRLKVFMQVHASKSNRLNILGGLRNMIQEGGVLSLWR) lie on the Mitochondrial matrix side of the membrane. The helical transmembrane segment at 243 to 262 (GNGINVLKIAPESAIKFMAY) threads the bilayer. The Mitochondrial intermembrane portion of the chain corresponds to 263–285 (EQIKRAIRGQQETLHVQERFVAG). A helical membrane pass occupies residues 286-299 (SLAGATAQTIIYPM). Topologically, residues 300 to 335 (EVLKTRLTLRRTGQYKGLLDCAKRILEREGPRAFYR) are mitochondrial matrix. A helical membrane pass occupies residues 336 to 355 (GYLPNVLGIIPYAGIDLAVY). Over 356–378 (ETLKNRWLQQYSHESANPGILVL) the chain is Mitochondrial intermembrane. Residues 379 to 396 (LGCGTISSTCGQIASYPL) traverse the membrane as a helical segment. At 397 to 435 (ALVRTRMQAQASIEGGPQVSMVGLLRHILSQEGVWGLYR) the chain is on the mitochondrial matrix side. A helical transmembrane segment spans residues 436 to 455 (GIAPNFMKVIPAVSISYVVY). The Mitochondrial intermembrane segment spans residues 456–467 (ENMKQALGVTSR).

This sequence belongs to the mitochondrial carrier (TC 2.A.29) family. In terms of assembly, interacts with MCU. Interacts with MICU1.

It is found in the mitochondrion inner membrane. The enzyme catalyses Mg(2+)(out) + phosphate(in) + ATP(out) = Mg(2+)(in) + phosphate(out) + ATP(in). It carries out the reaction ADP(out) + phosphate(in) + H(+)(out) = ADP(in) + phosphate(out) + H(+)(in). It catalyses the reaction AMP(out) + phosphate(in) = AMP(in) + phosphate(out). The catalysed reaction is phosphate(in) + ATP(out) + 2 H(+)(out) = phosphate(out) + ATP(in) + 2 H(+)(in). The enzyme catalyses dADP(in) + ADP(out) = dADP(out) + ADP(in). It carries out the reaction Mg(2+)(in) + ADP(out) + ATP(in) + H(+)(out) = Mg(2+)(out) + ADP(in) + ATP(out) + H(+)(in). It catalyses the reaction ADP(out) + diphosphate(in) = ADP(in) + diphosphate(out). The catalysed reaction is dAMP(in) + ADP(out) + H(+)(out) = dAMP(out) + ADP(in) + H(+)(in). The enzyme catalyses 3'-AMP(in) + ADP(out) + H(+)(out) = 3'-AMP(out) + ADP(in) + H(+)(in). It carries out the reaction dAMP(out) + phosphate(in) = dAMP(in) + phosphate(out). It catalyses the reaction 3'-AMP(out) + phosphate(in) = 3'-AMP(in) + phosphate(out). The catalysed reaction is dADP(out) + phosphate(in) + H(+)(out) = dADP(in) + phosphate(out) + H(+)(in). Activated by an increase in cytosolic calcium levels that induce a conformational change of the N-terminal regulatory domain, uncapping the channel and allowing transport. In terms of biological role, electroneutral antiporter that mediates the transport of adenine nucleotides through the inner mitochondrial membrane. Originally identified as an ATP-magnesium/inorganic phosphate antiporter, it also acts as a broad specificity adenyl nucleotide antiporter. By regulating the mitochondrial matrix adenine nucleotide pool could adapt to changing cellular energetic demands and indirectly regulate adenine nucleotide-dependent metabolic pathways. Also acts as a regulator of mitochondrial calcium uptake and can probably transport trace amounts of other divalent metal cations in complex with ATP. In vitro, a low activity is also observed with guanyl and pyrimidine nucleotides. In Mus musculus (Mouse), this protein is Mitochondrial adenyl nucleotide antiporter SLC25A23.